Reading from the N-terminus, the 330-residue chain is Ketol-acid reductoisomerase (NADP(+)) (330 aa).

The 181-residue stretch at 1–181 (MKVFYDSDFK…GLSRAGVIQT (181 aa)) folds into the KARI N-terminal Rossmann domain. Residues 24–27 (YGSQ), Arg-47, Ser-52, and 82–85 (DELQ) contribute to the NADP(+) site. His-107 is an active-site residue. Gly-133 provides a ligand contact to NADP(+). Positions 182 to 327 (TFKEETETDL…AKLRKMCGLE (146 aa)) constitute a KARI C-terminal knotted domain. Residues Asp-190, Glu-194, Glu-226, and Glu-230 each coordinate Mg(2+). Position 251 (Ser-251) interacts with substrate.

It belongs to the ketol-acid reductoisomerase family. The cofactor is Mg(2+).

The enzyme catalyses (2R)-2,3-dihydroxy-3-methylbutanoate + NADP(+) = (2S)-2-acetolactate + NADPH + H(+). It carries out the reaction (2R,3R)-2,3-dihydroxy-3-methylpentanoate + NADP(+) = (S)-2-ethyl-2-hydroxy-3-oxobutanoate + NADPH + H(+). Its pathway is amino-acid biosynthesis; L-isoleucine biosynthesis; L-isoleucine from 2-oxobutanoate: step 2/4. The protein operates within amino-acid biosynthesis; L-valine biosynthesis; L-valine from pyruvate: step 2/4. Involved in the biosynthesis of branched-chain amino acids (BCAA). Catalyzes an alkyl-migration followed by a ketol-acid reduction of (S)-2-acetolactate (S2AL) to yield (R)-2,3-dihydroxy-isovalerate. In the isomerase reaction, S2AL is rearranged via a Mg-dependent methyl migration to produce 3-hydroxy-3-methyl-2-ketobutyrate (HMKB). In the reductase reaction, this 2-ketoacid undergoes a metal-dependent reduction by NADPH to yield (R)-2,3-dihydroxy-isovalerate. The protein is Ketol-acid reductoisomerase (NADP(+)) of Methanococcus maripaludis (strain DSM 14266 / JCM 13030 / NBRC 101832 / S2 / LL).